Consider the following 28-residue polypeptide: VGCEECPMHCKGKNAVPTCDNGVCNCNA.

3 cysteine pairs are disulfide-bonded: C3–C19, C6–C24, and C10–C26.

The protein belongs to the short scorpion toxin superfamily. Potassium channel inhibitor family. Alpha-KTx 09 subfamily. In terms of tissue distribution, expressed by the venom gland.

It localises to the secreted. Its function is as follows. Blocks Shaker potassium channels. The chain is Potassium channel toxin alpha-KTx 9.10 from Mesobuthus eupeus (Lesser Asian scorpion).